The primary structure comprises 403 residues: CCA-adding enzyme (403 aa).

Positions 32 and 35 each coordinate ATP. Gly-32 and Arg-35 together coordinate CTP. Mg(2+)-binding residues include Asp-45 and Asp-47. ATP is bound by residues Arg-116, Asp-159, Arg-162, Arg-165, and Arg-168. CTP is bound by residues Arg-116, Asp-159, Arg-162, Arg-165, and Arg-168.

Belongs to the tRNA nucleotidyltransferase/poly(A) polymerase family. Bacterial CCA-adding enzyme type 3 subfamily. In terms of assembly, homodimer. Mg(2+) is required as a cofactor.

The enzyme catalyses a tRNA precursor + 2 CTP + ATP = a tRNA with a 3' CCA end + 3 diphosphate. It catalyses the reaction a tRNA with a 3' CCA end + 2 CTP + ATP = a tRNA with a 3' CCACCA end + 3 diphosphate. Its function is as follows. Catalyzes the addition and repair of the essential 3'-terminal CCA sequence in tRNAs without using a nucleic acid template. Adds these three nucleotides in the order of C, C, and A to the tRNA nucleotide-73, using CTP and ATP as substrates and producing inorganic pyrophosphate. tRNA 3'-terminal CCA addition is required both for tRNA processing and repair. Also involved in tRNA surveillance by mediating tandem CCA addition to generate a CCACCA at the 3' terminus of unstable tRNAs. While stable tRNAs receive only 3'-terminal CCA, unstable tRNAs are marked with CCACCA and rapidly degraded. The polypeptide is CCA-adding enzyme (Limosilactobacillus reuteri (strain DSM 20016) (Lactobacillus reuteri)).